A 530-amino-acid chain; its full sequence is Bifunctional purine biosynthesis protein PurH (530 aa).

In terms of domain architecture, MGS-like spans 1 to 148 (MNNARPIRRA…KNHKDVTIVV (148 aa)).

Belongs to the PurH family.

The catalysed reaction is (6R)-10-formyltetrahydrofolate + 5-amino-1-(5-phospho-beta-D-ribosyl)imidazole-4-carboxamide = 5-formamido-1-(5-phospho-D-ribosyl)imidazole-4-carboxamide + (6S)-5,6,7,8-tetrahydrofolate. The enzyme catalyses IMP + H2O = 5-formamido-1-(5-phospho-D-ribosyl)imidazole-4-carboxamide. It participates in purine metabolism; IMP biosynthesis via de novo pathway; 5-formamido-1-(5-phospho-D-ribosyl)imidazole-4-carboxamide from 5-amino-1-(5-phospho-D-ribosyl)imidazole-4-carboxamide (10-formyl THF route): step 1/1. The protein operates within purine metabolism; IMP biosynthesis via de novo pathway; IMP from 5-formamido-1-(5-phospho-D-ribosyl)imidazole-4-carboxamide: step 1/1. This chain is Bifunctional purine biosynthesis protein PurH, found in Vibrio parahaemolyticus serotype O3:K6 (strain RIMD 2210633).